Here is a 605-residue protein sequence, read N- to C-terminus: FAD-linked oxidoreductase easE (605 aa).

The signal sequence occupies residues 1 to 20 (MRHFVTFVVGFLLSWGFLSS). Residues asparagine 46 and asparagine 105 are each glycosylated (N-linked (GlcNAc...) asparagine). Residues 122–307 (CHQGRLPLYS…TQATVRAFPD (186 aa)) form the FAD-binding PCMH-type domain. Residue asparagine 370 is glycosylated (N-linked (GlcNAc...) asparagine).

Belongs to the oxygen-dependent FAD-linked oxidoreductase family. FAD serves as cofactor.

The protein operates within alkaloid biosynthesis; ergot alkaloid biosynthesis. Its function is as follows. FAD-linked oxidoreductase; part of the gene cluster that mediates the biosynthesis of fungal ergot alkaloid ergovaline, the predominant ergopeptine product in E.festucae var. lolii. DmaW catalyzes the first step of ergot alkaloid biosynthesis by condensing dimethylallyl diphosphate (DMAP) and tryptophan to form 4-dimethylallyl-L-tryptophan. The second step is catalyzed by the methyltransferase easF that methylates 4-dimethylallyl-L-tryptophan in the presence of S-adenosyl-L-methionine, resulting in the formation of 4-dimethylallyl-L-abrine. The catalase easC and the FAD-dependent oxidoreductase easE then transform 4-dimethylallyl-L-abrine to chanoclavine-I which is further oxidized by easD in the presence of NAD(+), resulting in the formation of chanoclavine-I aldehyde. Agroclavine dehydrogenase easG then mediates the conversion of chanoclavine-I aldehyde to agroclavine via a non-enzymatic adduct reaction: the substrate is an iminium intermediate that is formed spontaneously from chanoclavine-I aldehyde in the presence of glutathione. The presence of easA is not required to complete this reaction. Further conversion of agroclavine to paspalic acid is a two-step process involving oxidation of agroclavine to elymoclavine and of elymoclavine to paspalic acid, the second step being performed by the elymoclavine oxidase cloA. Paspalic acid is then further converted to D-lysergic acid. Ergovaline is assembled from D-lysergic acid and three different amino acids by the D-lysergyl-peptide-synthetase composed of a monomudular (lpsB) and a trimodular (lpsA) nonribosomal peptide synthetase subunit. This is FAD-linked oxidoreductase easE from Epichloe festucae var. lolii (Neotyphodium lolii).